The sequence spans 2166 residues: Protein TIC236, chloroplastic (2166 aa).

The N-terminal 37 residues, 1–37 (MSLRLQNPFLSTPLLHGSFNRREKRINVARRAFRSKR), are a transit peptide targeting the chloroplast. Residues 38–101 (IYSEKKQNDW…RSLAPVWEEG (64 aa)) lie on the Stromal side of the membrane. A helical transmembrane segment spans residues 102–122 (LFFLRCSVFFAVISGVCLLVW). At 123–2166 (YGQNKARVFV…LFEYSATSQD (2044 aa)) the chain is on the chloroplast intermembrane side. The segment at 1611–1649 (MSEGEVSETDRGGAVKIPSWAKEKEDDEKRTSRDRSEER) is disordered. Basic and acidic residues predominate over residues 1631–1649 (AKEKEDDEKRTSRDRSEER).

This sequence belongs to the TamB family. In terms of assembly, part of the TIC complex, which can interact with components of the TOC complex to form a larger import complex. Interacts with the TOC complex component TOC75-3.

It is found in the plastid. Its subcellular location is the chloroplast inner membrane. It localises to the chloroplast intermembrane space. Functionally, part of the inner chloroplast membrane translocon complex (TIC) which associates with the outer chloroplast membrane translocon complex (TOC) and forms a supercomplex involved in protein precursor import into the chloroplast stroma. Required for the import of HSP93, TIC40 and RBCS protein precursors in the chloroplast stroma. Links the outer and inner membrane translocons of the chloroplast envelope. The sequence is that of Protein TIC236, chloroplastic from Arabidopsis thaliana (Mouse-ear cress).